A 465-amino-acid polypeptide reads, in one-letter code: MQSATMEFDTIAAISTPPGEGAISIVRLSGEQAVAIANKVYRSGTKDLAKVPTHTIHYGHIVDPQNDQLIDEVMLSVMRAPKTFTREDVVEINCHGGIVVVNQLLQLLLREGARMAEPGEFTKRAFLNGRMDLSQAEAVMDLIRAKTDKAMNVALNQLDGNLSTLIRSLRQEILNTLAQVEVNIDYPEYDDVEELTTKLLLEKAEFVKAQIQQLLTTAKQGKILREGLSTAIIGRPNVGKSSLLNHLLREEKAIVTDIAGTTRDVIEEYVNVRGVPLKLIDTAGIRETEDIVERIGVERSRKALADSDLILLVLNQSEELTEEDRQLLEATKGLKRVILLNKMDLPTKLDPNELQELVPAEEILSVSVLSNTGLDQLEAKIADLFFGGQTGEKDATYISNTRHIALLDQAALSLQEVINGIEAGMPVDLVQIDMTRCWDYLGEIVGDSVQDELITQLFSQFCLGK.

(6S)-5-formyl-5,6,7,8-tetrahydrofolate-binding residues include Arg27, Glu91, and Arg130. One can recognise a TrmE-type G domain in the interval 227-386 (GLSTAIIGRP…LEAKIADLFF (160 aa)). Asn237 contributes to the K(+) binding site. Residues 237–242 (NVGKSS), 256–262 (TDIAGTT), and 281–284 (DTAG) each bind GTP. Mg(2+) is bound at residue Ser241. Residues Thr256, Ile258, and Thr261 each coordinate K(+). A Mg(2+)-binding site is contributed by Thr262. Lys465 contacts (6S)-5-formyl-5,6,7,8-tetrahydrofolate.

This sequence belongs to the TRAFAC class TrmE-Era-EngA-EngB-Septin-like GTPase superfamily. TrmE GTPase family. In terms of assembly, homodimer. Heterotetramer of two MnmE and two MnmG subunits. K(+) is required as a cofactor.

It localises to the cytoplasm. In terms of biological role, exhibits a very high intrinsic GTPase hydrolysis rate. Involved in the addition of a carboxymethylaminomethyl (cmnm) group at the wobble position (U34) of certain tRNAs, forming tRNA-cmnm(5)s(2)U34. In Enterococcus faecalis (strain ATCC 700802 / V583), this protein is tRNA modification GTPase MnmE.